A 101-amino-acid chain; its full sequence is Small ribosomal subunit protein uS14 (101 aa).

Residues 52-72 (PRDSSPVRQRRRCRSTGRPRG) form a disordered region. Positions 59–72 (RQRRRCRSTGRPRG) are enriched in basic residues.

It belongs to the universal ribosomal protein uS14 family. In terms of assembly, part of the 30S ribosomal subunit. Contacts proteins S3 and S10.

Functionally, binds 16S rRNA, required for the assembly of 30S particles and may also be responsible for determining the conformation of the 16S rRNA at the A site. In Nitrosococcus oceani (strain ATCC 19707 / BCRC 17464 / JCM 30415 / NCIMB 11848 / C-107), this protein is Small ribosomal subunit protein uS14.